Here is a 379-residue protein sequence, read N- to C-terminus: Cytochrome b (379 aa).

4 consecutive transmembrane segments (helical) span residues 33–53 (FGSLLGMCLVIQILTGLFLAM), 77–98 (WLIRYLHANGASMFFICLFIHV), 113–133 (WNIGIILFLTTMATAFVGYVL), and 178–198 (FFAFHFILPFIIAAFALVHLL). Heme b is bound by residues His83 and His97. Residues His182 and His196 each contribute to the heme b site. An a ubiquinone-binding site is contributed by His201. 4 consecutive transmembrane segments (helical) span residues 226 to 246 (IKDLLGIFLLLLVLMILTLFF), 288 to 308 (LGGVLALILSILILAAFPLLN), 320 to 340 (VTQVIYWIFIANLLVLTWIGG), and 347 to 367 (FTMIGQIASITYFAIIIILIP).

This sequence belongs to the cytochrome b family. In terms of assembly, the cytochrome bc1 complex contains 11 subunits: 3 respiratory subunits (MT-CYB, CYC1 and UQCRFS1), 2 core proteins (UQCRC1 and UQCRC2) and 6 low-molecular weight proteins (UQCRH/QCR6, UQCRB/QCR7, UQCRQ/QCR8, UQCR10/QCR9, UQCR11/QCR10 and a cleavage product of UQCRFS1). This cytochrome bc1 complex then forms a dimer. Heme b is required as a cofactor.

Its subcellular location is the mitochondrion inner membrane. Its function is as follows. Component of the ubiquinol-cytochrome c reductase complex (complex III or cytochrome b-c1 complex) that is part of the mitochondrial respiratory chain. The b-c1 complex mediates electron transfer from ubiquinol to cytochrome c. Contributes to the generation of a proton gradient across the mitochondrial membrane that is then used for ATP synthesis. This is Cytochrome b (MT-CYB) from Akodon subfuscus (Puno grass mouse).